Consider the following 358-residue polypeptide: MKAYKVAVLAGDGIGPLVMKEALKILTFISQKYNFSFEFNEAKIGGASIDAYGVALSDETLKLCEQSDAILFGSVGGPKWDNLPIDQRPERASLLPLRKHFNLFANLRPCKIYESLTHASPLKNEIIQKGVDILCVRELTGGIYFGKQDLGKESAYDTEIYTKKEIERIAHIAFESARIRKKKVHLIDKANVLASSILWREVVANVVKDYQDINLEYMYVDNAAMQIVKNPSIFDVMLCSNLFGDILSDELAAINGSLGLLSSASLNDKGFGLYEPAGGSAPDIAHLNIANPIAQILSAALMLKYSFKEEQAAQDIENAISLALAQGKMTKDLNAKSYLNTDEMGDCILEILKENNNG.

77–90 is an NAD(+) binding site; the sequence is GPKWDNLPIDQRPE. Arginine 98, arginine 108, arginine 137, and aspartate 221 together coordinate substrate. 3 residues coordinate Mg(2+): aspartate 221, aspartate 245, and aspartate 249. 279–291 contacts NAD(+); that stretch reads GSAPDIAHLNIAN.

Belongs to the isocitrate and isopropylmalate dehydrogenases family. LeuB type 1 subfamily. As to quaternary structure, homodimer. Mg(2+) is required as a cofactor. Requires Mn(2+) as cofactor.

The protein localises to the cytoplasm. It carries out the reaction (2R,3S)-3-isopropylmalate + NAD(+) = 4-methyl-2-oxopentanoate + CO2 + NADH. It participates in amino-acid biosynthesis; L-leucine biosynthesis; L-leucine from 3-methyl-2-oxobutanoate: step 3/4. Functionally, catalyzes the oxidation of 3-carboxy-2-hydroxy-4-methylpentanoate (3-isopropylmalate) to 3-carboxy-4-methyl-2-oxopentanoate. The product decarboxylates to 4-methyl-2 oxopentanoate. The polypeptide is 3-isopropylmalate dehydrogenase (Campylobacter jejuni (strain RM1221)).